Consider the following 467-residue polypeptide: Argininosuccinate lyase (467 aa).

It belongs to the lyase 1 family. Argininosuccinate lyase subfamily.

It is found in the cytoplasm. The catalysed reaction is 2-(N(omega)-L-arginino)succinate = fumarate + L-arginine. It participates in amino-acid biosynthesis; L-arginine biosynthesis; L-arginine from L-ornithine and carbamoyl phosphate: step 3/3. The polypeptide is Argininosuccinate lyase (Sinorhizobium fredii (strain NBRC 101917 / NGR234)).